The primary structure comprises 110 residues: Protein OPG154 (110 aa).

Residues Val-36–Asp-101 adopt a coiled-coil conformation.

Belongs to the orthopoxvirus OPG154 protein family. In terms of assembly, homohexamers, covalently linked. Interacts with OPG144 and OPG153.

The protein resides in the virion. Its function is as follows. Structural protein involved in the envelopment of mature virion (MV) to form the wrapped virion (WV). The wrapping consists of the addition of Golgi membranes to the mature virion. Participates in mature virion (MV) movement within the infected cell. May play an indirect role in MV-cell fusion. This chain is Protein OPG154 (OPG154), found in Vaccinia virus (strain Western Reserve) (VACV).